The sequence spans 247 residues: Orotidine 5'-phosphate decarboxylase (247 aa).

Residues Asp-22, Lys-44, 71–80 (DLKFHDIPNT), Thr-131, Arg-192, Gln-201, Gly-221, and Arg-222 each bind substrate. Lys-73 functions as the Proton donor in the catalytic mechanism.

Belongs to the OMP decarboxylase family. Type 1 subfamily. As to quaternary structure, homodimer.

It carries out the reaction orotidine 5'-phosphate + H(+) = UMP + CO2. Its pathway is pyrimidine metabolism; UMP biosynthesis via de novo pathway; UMP from orotate: step 2/2. In terms of biological role, catalyzes the decarboxylation of orotidine 5'-monophosphate (OMP) to uridine 5'-monophosphate (UMP). In Pectobacterium atrosepticum (strain SCRI 1043 / ATCC BAA-672) (Erwinia carotovora subsp. atroseptica), this protein is Orotidine 5'-phosphate decarboxylase.